Consider the following 425-residue polypeptide: tRNA(Ile)-lysidine synthase (425 aa).

27–32 (SGGLDS) is an ATP binding site.

The protein belongs to the tRNA(Ile)-lysidine synthase family.

The protein localises to the cytoplasm. It carries out the reaction cytidine(34) in tRNA(Ile2) + L-lysine + ATP = lysidine(34) in tRNA(Ile2) + AMP + diphosphate + H(+). In terms of biological role, ligates lysine onto the cytidine present at position 34 of the AUA codon-specific tRNA(Ile) that contains the anticodon CAU, in an ATP-dependent manner. Cytidine is converted to lysidine, thus changing the amino acid specificity of the tRNA from methionine to isoleucine. This Streptococcus pneumoniae (strain Taiwan19F-14) protein is tRNA(Ile)-lysidine synthase.